The chain runs to 805 residues: RFX-like transcription factor daf-19 (805 aa).

Polar residues predominate over residues 1-14 (MTNEEPVPSTSSVL). The disordered stretch occupies residues 1-113 (MTNEEPVPST…TPRKKMEPED (113 aa)). Over residues 19–92 (KNVKIETPSR…DSKSLSKETH (74 aa)) the composition is skewed to basic and acidic residues. Polar residues predominate over residues 93-104 (NTISTRSSSSGT). Residues 260–334 (TVNWLFENYE…YHYYGIRLKD (75 aa)) constitute a DNA-binding region (RFX-type winged-helix).

The protein belongs to the RFX family. In terms of tissue distribution, ciliated sensory neurons. Expressed in the male tail HOB and RnB neurons but not in male-specific CEM head neurons or other ciliated neurons.

Its subcellular location is the nucleus. Functionally, probable transcription factor. May regulate some genes of ciliated sensory neurons. May activate the expression of the shared components of sensory cilia, but not the cell-type-specific expression. Together with transcription factor atf-7, involved in regulation of the serotonergic response of ADF neurons to pathogenic food. In terms of biological role, involved in male mating behavior; may play a role in functional specialization of PKD ciliated sensory neurons. In Caenorhabditis elegans, this protein is RFX-like transcription factor daf-19.